Here is a 205-residue protein sequence, read N- to C-terminus: uncharacterized protein (205 aa).

One can recognise an HTH tetR-type domain in the interval 11 to 71 (KTRRALVDAA…EMVDEAGLML (61 aa)).

This is an uncharacterized protein from Haemophilus influenzae (strain ATCC 51907 / DSM 11121 / KW20 / Rd).